We begin with the raw amino-acid sequence, 352 residues long: MDYQVSSPTYDIDYYTSEPCQKINVKQIAARLLPPLYSLVFIFGFVGNILVVLILINCKRLKSMTDIYLLNLAISDLLFLLTVPFWAHYAAAQWDFGNTMCQLLTGLYFIGFFSGIFFIILLTIDRYLAIVHAVFALKARTVTFGVVTSVITWVVAVFASLPGIIFTRSQREGLHYTCSSHFPYSQYQFWKNFQTLKIVILGLVLPLLVMVICYSGILKTLLRCRNEKKRHRAVRLIFTIMIVYFLFWAPYNIVLLLNTFQEFFGLNNCSSSNRLDQAMQVTETLGMTHCCINPIIYAFVGEKFRNYLLVFFQKHIAKRFCKCCSIFQQEAPERASSVYTRSTGEQEISVGL.

The Extracellular segment spans residues methionine 1–alanine 30. At tyrosine 3 the chain carries Sulfotyrosine. 2 O-linked (GalNAc...) serine glycosylation sites follow: serine 6 and serine 7. A sulfotyrosine mark is found at tyrosine 10, tyrosine 14, and tyrosine 15. 2 cysteine pairs are disulfide-bonded: cysteine 20/cysteine 269 and cysteine 101/cysteine 178. A helical membrane pass occupies residues arginine 31–cysteine 58. Over lysine 59–tyrosine 68 the chain is Cytoplasmic. Residues leucine 69–tyrosine 89 form a helical membrane-spanning segment. The Extracellular portion of the chain corresponds to alanine 90–glutamine 102. A helical membrane pass occupies residues leucine 103–isoleucine 124. Topologically, residues aspartate 125–threonine 141 are cytoplasmic. The chain crosses the membrane as a helical span at residues valine 142–phenylalanine 166. Residues threonine 167–isoleucine 198 are Extracellular-facing. A helical membrane pass occupies residues valine 199–leucine 218. At lysine 219–arginine 235 the chain is on the cytoplasmic side. The chain crosses the membrane as a helical span at residues leucine 236–phenylalanine 260. Over glutamine 261–glutamine 277 the chain is Extracellular. Residues alanine 278–glycine 301 form a helical membrane-spanning segment. The Cytoplasmic portion of the chain corresponds to glutamate 302 to leucine 352. S-palmitoyl cysteine attachment occurs at residues cysteine 321, cysteine 323, and cysteine 324. 4 positions are modified to phosphoserine; by BARK1: serine 336, serine 337, serine 342, and serine 349.

This sequence belongs to the G-protein coupled receptor 1 family. Interacts with PRAF2. Efficient ligand binding to CCL3/MIP-1alpha and CCL4/MIP-1beta requires sulfation, O-glycosylation and sialic acid modifications. Glycosylation on Ser-6 is required for efficient binding of CCL4. Interacts with GRK2. Interacts with ARRB1 and ARRB2. Interacts with CNIH4. Interacts with S100A4; this interaction stimulates T-lymphocyte chemotaxis. Post-translationally, sulfated on at least 2 of the N-terminal tyrosines. Sulfation is required for efficient binding of the chemokines, CCL3 and CCL4. In terms of processing, palmitoylation in the C-terminal is important for cell surface expression. Phosphorylation on serine residues in the C-terminal is stimulated by binding CC chemokines especially by APO-RANTES. Post-translationally, O-glycosylated, but not N-glycosylated. Ser-6 appears to be the major site even if Ser-7 may be also O-glycosylated. Also sialylated glycans present which contribute to chemokine binding. Thr-16 and Ser-17 may also be glycosylated and, if so, with small moieties such as a T-antigen.

It localises to the cell membrane. In terms of biological role, receptor for a number of inflammatory CC-chemokines including CCL3/MIP-1-alpha, CCL4/MIP-1-beta and RANTES and subsequently transduces a signal by increasing the intracellular calcium ion level. May play a role in the control of granulocytic lineage proliferation or differentiation. Participates in T-lymphocyte migration to the infection site by acting as a chemotactic receptor. The chain is C-C chemokine receptor type 5 (CCR5) from Papio anubis (Olive baboon).